A 98-amino-acid polypeptide reads, in one-letter code: MTTNVTQLAATLASLAALLAEQQPAPEPEPEPAARRLPNRVLLTVEEAAKQLGLGRTKTYALVASGEIESVRIGRLRRIPRTAIDDYAARLIAQQSAA.

Positions 42 to 63 (LLTVEEAAKQLGLGRTKTYALV) form a DNA-binding region, H-T-H motif.

It to the xis proteins of bacteriophages and of plasmid pSAM2 from S.ambofaciens.

In terms of biological role, possibly a non-classical excisionase. The chain is Probable excisionase (xis) from Saccharopolyspora erythraea (Streptomyces erythraeus).